Here is a 479-residue protein sequence, read N- to C-terminus: Glutamate--tRNA ligase (479 aa).

The short motif at 11–21 (PSPTGYLHIGG) is the 'HIGH' region element. Zn(2+) is bound by residues C108, C110, C135, and E137. The short motif at 250-254 (KLSKR) is the 'KMSKS' region element. K253 is an ATP binding site.

This sequence belongs to the class-I aminoacyl-tRNA synthetase family. Glutamate--tRNA ligase type 1 subfamily. As to quaternary structure, monomer. It depends on Zn(2+) as a cofactor.

Its subcellular location is the cytoplasm. The enzyme catalyses tRNA(Glu) + L-glutamate + ATP = L-glutamyl-tRNA(Glu) + AMP + diphosphate. In terms of biological role, catalyzes the attachment of glutamate to tRNA(Glu) in a two-step reaction: glutamate is first activated by ATP to form Glu-AMP and then transferred to the acceptor end of tRNA(Glu). The chain is Glutamate--tRNA ligase from Myxococcus xanthus (strain DK1622).